We begin with the raw amino-acid sequence, 867 residues long: Piwi-like protein 1 (867 aa).

The segment covering 1-11 (MTGRARARARG) has biased composition (basic residues). The segment at 1-70 (MTGRARARAR…QRGPQDAPKT (70 aa)) is disordered. The segment covering 28 to 44 (AQKTLPSHPSEQRQSLQ) has biased composition (polar residues). Residues 286-397 (TVLDFMYSLY…LIPELCYLTG (112 aa)) enclose the PAZ domain. A required for binding 2'-O-methylated 3'-end of piRNAs region spans residues 324 to 326 (TYR). The MID region stretch occupies residues 485–621 (SRETRVAPLI…LQMNCKMGGE (137 aa)). The 293-residue stretch at 561–853 (IVVCILSSTR…LAFLVGQSIH (293 aa)) folds into the Piwi domain. Residues Asp638, Glu676, Asp708, and His842 contribute to the active site.

The protein belongs to the argonaute family. Piwi subfamily. Requires Mg(2+) as cofactor. In terms of processing, methylated on arginine residues; required for the interaction with Tudor domain-containing protein and subsequent localization to the meiotic nuage, also named P granule.

Its subcellular location is the cytoplasm. In terms of biological role, endoribonuclease that plays a central role in postnatal germ cells by repressing transposable elements and preventing their mobilization, which is essential for the germline integrity. Acts via the piRNA metabolic process, which mediates the repression of transposable elements during meiosis by forming complexes composed of piRNAs and Piwi proteins and govern the methylation and subsequent repression of transposons. Directly binds methylated piRNAs, a class of 24 to 30 nucleotide RNAs that are generated by a Dicer-independent mechanism and are primarily derived from transposons and other repeated sequence elements. Strongly prefers a uridine in the first position of their guide (g1U preference, also named 1U-bias). Besides their function in transposable elements repression, piRNAs are probably involved in other processes during meiosis such as translation regulation. Not involved in the piRNA amplification loop, also named ping-pong amplification cycle. Acts as an endoribonuclease that cleaves transposon messenger RNAs. This chain is Piwi-like protein 1 (PIWIL1), found in Gallus gallus (Chicken).